Reading from the N-terminus, the 148-residue chain is Glutaredoxin-C10 (148 aa).

Residues 16–55 (TLDLTVHPPPPPPLPPPAPSTVSSSTASTSLSFDEEETSE) are disordered. Pro residues predominate over residues 22-34 (HPPPPPPLPPPAP). The span at 35-47 (STVSSSTASTSLS) shows a compositional bias: low complexity. The Glutaredoxin domain occupies 55–147 (ESKIGRLISE…PRLVEVGALW (93 aa)). A disulfide bond links Cys-76 and Cys-79.

This sequence belongs to the glutaredoxin family. CC-type subfamily.

It localises to the cytoplasm. Has a glutathione-disulfide oxidoreductase activity in the presence of NADPH and glutathione reductase. Reduces low molecular weight disulfides and proteins. The protein is Glutaredoxin-C10 (GRXC10) of Arabidopsis thaliana (Mouse-ear cress).